The sequence spans 421 residues: ATP-dependent RNA helicase RhlB (421 aa).

Positions 9-37 match the Q motif motif; it reads QKFSDFALHPKVVEALEKKGFHNCTPIQA. One can recognise a Helicase ATP-binding domain in the interval 40–219; it reads LPLTLAGRDV…FEQMNNAEYI (180 aa). 53-60 lines the ATP pocket; that stretch reads AQTGTGKT. Residues 165–168 carry the DEAD box motif; the sequence is DEAD. In terms of domain architecture, Helicase C-terminal spans 245–390; sequence RLLQTLIEEE…VSKYNPDALM (146 aa). A disordered region spans residues 392 to 421; sequence DLPKPLRLTRPRTGNGPRRTGAPRNRRRSG. A compositionally biased stretch (low complexity) spans 402–414; it reads PRTGNGPRRTGAP.

It belongs to the DEAD box helicase family. RhlB subfamily. As to quaternary structure, component of the RNA degradosome, which is a multiprotein complex involved in RNA processing and mRNA degradation.

The protein localises to the cytoplasm. It carries out the reaction ATP + H2O = ADP + phosphate + H(+). Its function is as follows. DEAD-box RNA helicase involved in RNA degradation. Has RNA-dependent ATPase activity and unwinds double-stranded RNA. The polypeptide is ATP-dependent RNA helicase RhlB (Escherichia coli (strain SMS-3-5 / SECEC)).